The chain runs to 277 residues: MGNTIRALVAFIPADRCQNYVVRDLREMPLDKMVDLSGSQLRRFPLHVCSFRELVKLYLSDNHLNSLPPELGQLQNLQILALDFNNFKALPQVVCTLKQLCILYLGNNKLCDLPSELSLLQNLRTLWIEANCLTQLPDVVCELSLLKTLHAGSNALRLLPGQLRRLQELRTIWLSGNRLTDFPTVLLHMPFLEVIDVDWNSIRYFPSLAHLSSLKLVIYDHNPCRNAPKVAKGVRRVGRWAEETPEPDPRKARRYALVREESQELQAPVPLLPPTNS.

LRR repeat units follow at residues 53–74 (ELVKLYLSDNHLNSLPPELGQL), 76–97 (NLQILALDFNNFKALPQVVCTL), 99–120 (QLCILYLGNNKLCDLPSELSLL), 122–143 (NLRTLWIEANCLTQLPDVVCEL), 145–167 (LLKTLHAGSNALRLLPGQLRRLQ), 168–189 (ELRTIWLSGNRLTDFPTVLLHM), and 191–212 (FLEVIDVDWNSIRYFPSLAHLS).

It is found in the nucleus. Functionally, may play important roles in cardiac development and/or cardiac function. This chain is Leucine-rich repeat-containing protein 10 (LRRC10), found in Homo sapiens (Human).